The sequence spans 120 residues: Large ribosomal subunit protein bL20c (120 aa).

This sequence belongs to the bacterial ribosomal protein bL20 family.

The protein localises to the plastid. Binds directly to 23S ribosomal RNA and is necessary for the in vitro assembly process of the 50S ribosomal subunit. It is not involved in the protein synthesizing functions of that subunit. This is Large ribosomal subunit protein bL20c (rpl20) from Cuscuta gronovii (Common dodder).